The sequence spans 427 residues: Putative transporter YdfJ (427 aa).

Residues 1–7 (MDFQLYS) lie on the Cytoplasmic side of the membrane. The next 2 membrane-spanning stretches (helical) occupy residues 8–28 (LGAALVFHEIFFPESSTAMAL) and 29–49 (ILAMGTYGAGYVARIVGAFIF). The Cytoplasmic portion of the chain corresponds to 50 to 74 (GKMGDRIGRKKVLFITITMMGICTT). The helical transmembrane segment at 75 to 95 (LIGVLPTYAQIGVFAPILLVT) threads the bilayer. The Periplasmic segment spans residues 96–97 (LR). The helical transmembrane segment at 98–118 (IIQGLGAGAEISGAGTMLAEY) threads the bilayer. At 119-132 (APKGKRGIISSFVA) the chain is on the cytoplasmic side. A helical membrane pass occupies residues 133 to 153 (MGTNCGTLSATAIWAFMFFIL). Residues 154–157 (SKEE) are Periplasmic-facing. A helical transmembrane segment spans residues 158 to 178 (LLAWGWRIPFLASVVVMVFAI). At 179-225 (WLRMNLKESPVFEKVNDSNQPTAKPAPAGSMFQSKSFWLATGLRFGQ) the chain is on the cytoplasmic side. A helical transmembrane segment spans residues 226–246 (AGNSGLIQTFLAGYLVQTLLF). Residues 247 to 251 (NKAIP) are Periplasmic-facing. Residues 252-272 (TDALMISSILGFMTIPFLGWL) traverse the membrane as a helical segment. At 273-279 (SDKIGRR) the chain is on the cytoplasmic side. Residues 280 to 300 (IPYIIMNTSAIVLAWPMLSII) form a helical membrane-spanning segment. The Periplasmic segment spans residues 301–307 (VDKSYAP). The helical transmembrane segment at 308–328 (STIMVALIVIHNCAVLGLFAL) threads the bilayer. The Cytoplasmic portion of the chain corresponds to 329 to 351 (ENITMAEMFGCKNRFTRMAISKE). The helical transmembrane segment at 352–372 (IGGLIASGFGPILAGIFCTMT) threads the bilayer. Residue Glu373 is a topological domain, periplasmic. Residues 374-394 (SWYPIAIMIMAYSVIGLISAL) form a helical membrane-spanning segment. Topologically, residues 395–427 (KMPEVKDRDLSALEDAAEDQPRVVRAAQPSRSL) are cytoplasmic.

The protein belongs to the major facilitator superfamily. Metabolite:H+ Symporter (MHS) family (TC 2.A.1.6) family.

It localises to the cell inner membrane. Functionally, when overexpressed in human HEK-293 cells forms an inward rectifying potassium channel. This is Putative transporter YdfJ (ydfJ) from Escherichia coli (strain K12).